A 156-amino-acid chain; its full sequence is Large ribosomal subunit protein uL22 (156 aa).

It belongs to the universal ribosomal protein uL22 family. Part of the 50S ribosomal subunit.

Functionally, this protein binds specifically to 23S rRNA. It makes multiple contacts with different domains of the 23S rRNA in the assembled 50S subunit and ribosome. The globular domain of the protein is located near the polypeptide exit tunnel on the outside of the subunit, while an extended beta-hairpin is found that lines the wall of the exit tunnel in the center of the 70S ribosome. The chain is Large ribosomal subunit protein uL22 from Methanocaldococcus jannaschii (strain ATCC 43067 / DSM 2661 / JAL-1 / JCM 10045 / NBRC 100440) (Methanococcus jannaschii).